The sequence spans 470 residues: Cysteine--tRNA ligase (470 aa).

Residue cysteine 28 participates in Zn(2+) binding. Positions 30–40 (PTVYNYIHIGN) match the 'HIGH' region motif. 3 residues coordinate Zn(2+): cysteine 211, histidine 236, and glutamate 240. Positions 270-274 (KMSKS) match the 'KMSKS' region motif. Residue lysine 273 participates in ATP binding.

It belongs to the class-I aminoacyl-tRNA synthetase family. Monomer. Zn(2+) is required as a cofactor.

Its subcellular location is the cytoplasm. It carries out the reaction tRNA(Cys) + L-cysteine + ATP = L-cysteinyl-tRNA(Cys) + AMP + diphosphate. This chain is Cysteine--tRNA ligase, found in Enterococcus faecalis (strain ATCC 700802 / V583).